The sequence spans 47 residues: Potassium channel toxin gamma-KTx 5.1 (47 aa).

4 disulfide bridges follow: Cys5-Cys23, Cys11-Cys34, Cys20-Cys39, and Cys24-Cys41.

This sequence belongs to the ergtoxin family. Gamma-KTx 5 subfamily. In terms of tissue distribution, expressed by the venom gland.

The protein localises to the secreted. Its function is as follows. Reversibly blocks Kv11/ERG potassium channels. The protein is Potassium channel toxin gamma-KTx 5.1 of Centruroides sculpturatus (Arizona bark scorpion).